Reading from the N-terminus, the 89-residue chain is Large ribosomal subunit protein eL34 (89 aa).

Residues 1-22 (MPAPRYKSGSSKKVYRKAPGNS) form a disordered region.

The protein belongs to the eukaryotic ribosomal protein eL34 family.

This Methanococcus maripaludis (strain C7 / ATCC BAA-1331) protein is Large ribosomal subunit protein eL34.